The following is a 398-amino-acid chain: Small ribosomal subunit protein mS29 (398 aa).

The transit peptide at 1-21 directs the protein to the mitochondrion; that stretch reads MMLKGITRLISRIHKLDPGRF. A disordered region spans residues 39-67; that stretch reads QVPVESPRAISRTNENDPAKHGDQHEGQH. Residues 52-66 show a composition bias toward basic and acidic residues; it reads NENDPAKHGDQHEGQ. GTP-binding positions include M100 and 128 to 135; that span reads GEKGTGKT. N6-acetyllysine is present on residues K175 and K207.

The protein belongs to the mitochondrion-specific ribosomal protein mS29 family. In terms of assembly, component of the mitochondrial small ribosomal subunit (mt-SSU). Mature mammalian 55S mitochondrial ribosomes consist of a small (28S) and a large (39S) subunit. The 28S small subunit contains a 12S ribosomal RNA (12S mt-rRNA) and 30 different proteins. The 39S large subunit contains a 16S rRNA (16S mt-rRNA), a copy of mitochondrial valine transfer RNA (mt-tRNA(Val)), which plays an integral structural role, and 52 different proteins. Interacts with DELE1. Interacts with NOA1. As to expression, ubiquitous.

It is found in the mitochondrion. The catalysed reaction is GTP + H2O = GDP + phosphate + H(+). Its function is as follows. As a component of the mitochondrial small ribosomal subunit, it plays a role in the translation of mitochondrial mRNAs. Involved in mediating interferon-gamma-induced cell death. Displays GTPase activity in vitro. This is Small ribosomal subunit protein mS29 from Homo sapiens (Human).